Consider the following 616-residue polypeptide: D-glucuronyl C5-epimerase (616 aa).

Topologically, residues 1 to 12 (MKCLRWRSNRHR) are cytoplasmic. Residues 13–29 (IYLLVACGALFLLNRHL) traverse the membrane as a helical; Signal-anchor for type II membrane protein segment. Residues 30 to 616 (TQEESRIDEE…YAYGKRAKHN (587 aa)) lie on the Extracellular side of the membrane. Substrate is bound by residues Tyr136, 141-143 (RDR), and Gln169. 4 N-linked (GlcNAc...) asparagine glycosylation sites follow: Asn188, Asn232, Asn267, and Asn471. Residues Tyr504, Arg562, and 574–580 (RWDYHAV) each bind substrate.

The protein belongs to the D-glucuronyl C5-epimerase family. As to quaternary structure, homodimer. Expression in comma stage embryos is strong in the hypodermis and intestine and weaker in the head region. In late embryos, larval, and adult stages, expressed primarily in hypodermis and intestine.

The protein localises to the cell membrane. Its subcellular location is the secreted. It is found in the extracellular space. The protein resides in the extracellular matrix. It localises to the basement membrane. The catalysed reaction is [heparosan-N-sulfate](n) = [heparan-N-sulfate](n). It participates in glycan metabolism; heparan sulfate biosynthesis. It functions in the pathway glycan metabolism; heparin biosynthesis. Converts D-glucuronic acid residues adjacent to N-sulfate sugar residues to L-iduronic acids. Plays a role in the early migration of AQR and PQR neurons, which descend from the Q neuroblasts. The sequence is that of D-glucuronyl C5-epimerase (hse-5) from Caenorhabditis elegans.